We begin with the raw amino-acid sequence, 266 residues long: MDELMGKTCSYFYPRPTLGSLSDKKALFGGYPTQEQVYLLESIGVEWFVDLTLGNEKRTTPYIIQNKEKYITFPIMDQRVPENIIEFVKFINKLVNIISGLTDCEKLYIHCKGGHGRSGLIAATLLCVMDEISPEKAIKETTLSHPQTKAQCNFLHYLFGSQNINNDSLLSPYSHHQVIIVCGKTETVFKSASDAVYYLLHNSSGKSDYFIRCVEFVLDNKFQQHPSCKQQLLQTGFRQLQCRLGQNCIGTICIKLRNKYYNNLEV.

The Tyrosine-protein phosphatase domain occupies 15-167 (RPTLGSLSDK…LFGSQNINND (153 aa)). Cys-111 serves as the catalytic Phosphocysteine intermediate.

It belongs to the protein-tyrosine phosphatase family.

It carries out the reaction O-phospho-L-tyrosyl-[protein] + H2O = L-tyrosyl-[protein] + phosphate. The polypeptide is Putative tyrosine phosphatase 197R (Invertebrate iridescent virus 6 (IIV-6)).